A 493-amino-acid chain; its full sequence is Cytoplasmic tRNA 2-thiolation protein 2 (493 aa).

Residue S489 is modified to Phosphoserine.

Belongs to the CTU2/NCS2 family. In terms of assembly, interacts with NCS6 and URM1. May act by forming a heterodimer with NCS6.

Its subcellular location is the cytoplasm. The protein operates within tRNA modification; 5-methoxycarbonylmethyl-2-thiouridine-tRNA biosynthesis. Plays a central role in 2-thiolation of mcm(5)S(2)U at tRNA wobble positions of tRNA(Lys), tRNA(Glu) and tRNA(Gln). May act by forming a heterodimer with NCS6 that ligates sulfur from thiocarboxylated URM1 onto the uridine of tRNAs at wobble position. Prior mcm(5) tRNA modification by the elongator complex is required for 2-thiolation. May also be involved in protein urmylation and in invasive and pseudohyphal growth. Inhibits replication of Brome mosaic virus. The chain is Cytoplasmic tRNA 2-thiolation protein 2 from Saccharomyces cerevisiae (strain ATCC 204508 / S288c) (Baker's yeast).